A 984-amino-acid polypeptide reads, in one-letter code: Zinc finger and BTB domain-containing protein 4 (984 aa).

The BTB domain maps to 30–131; sequence CDVTLIAGDT…IYSARLALPG (102 aa). A Glycyl lysine isopeptide (Lys-Gly) (interchain with G-Cter in SUMO2) cross-link involves residue lysine 40. Disordered stretches follow at residues 71–104, 172–210, and 227–262; these read TGGSAPSPATTTAASSSSSPPPPASPHSSSPPRV, MVTSEPNEDSLGPGLRTDGGWEGDKAEPLTPDSQPRRPF, and THEAQCRRGSNTRGSAGLGPGGSGPGGPAGVDASAL. Low complexity predominate over residues 74-88; sequence SAPSPATTTAASSSS. The interval 165-324 is interaction with CBFA2T3; the sequence is VPPAPSSMVT…CRYCEKVFAL (160 aa). A C2H2-type 1; atypical zinc finger spans residues 210–232; sequence FPCPRCGKSFIHPKRLQTHEAQC. Over residues 242–255 the composition is skewed to gly residues; that stretch reads AGLGPGGSGPGGPA. C2H2-type zinc fingers lie at residues 285-307, 313-335, and 341-364; these read YVCAACERSYVTLSSLKRHSNVH, YPCRYCEKVFALAEYRTKHEVWH, and YQCIFCWETFVTYYNLKTHQRAFH. At serine 367 the chain carries Phosphoserine. Residues 461–575 are disordered; sequence GSSSSGAAGG…GSSQLQAPPP (115 aa). Over residues 467 to 477 the composition is skewed to gly residues; it reads AAGGGPVGTGG. Composition is skewed to low complexity over residues 478-488 and 507-529; these read SQAASVITYTT and ATPTSPASTAVIPATAAGPATAT. Lysine 548 participates in a covalent cross-link: Glycyl lysine isopeptide (Lys-Gly) (interchain with G-Cter in SUMO2). Residues 552–565 are compositionally biased toward gly residues; sequence GVSGSGGSPTGTGR. Lysine 590 is covalently cross-linked (Glycyl lysine isopeptide (Lys-Gly) (interchain with G-Cter in SUMO2)). Disordered stretches follow at residues 593–696, 713–734, 756–836, 853–876, and 947–984; these read ISET…GERR, RKHQEAHSGGSHNSRTGRRSST, QRHA…VAGG, GGSRDPGAGKGKPGNEGPVGASEG, and QTAPPTPPTPPPPLPLPVPPKGVGEMTGVERTQKGDVG. Residues 604 to 627 are compositionally biased toward acidic residues; the sequence is SGEEVEESEEEEEEEEEEDQEDQE. Residues 628-637 show a composition bias toward basic and acidic residues; the sequence is ESKAGGEDQL. C2H2-type zinc fingers lie at residues 697–719 and 736–758; these read HRCGDCAQAFATLRKLRKHQEAH and FTCPHCAKVCKTAAALNRHGQRH. A phosphothreonine; by HIPK2 mark is found at threonine 766 and threonine 768. Low complexity predominate over residues 807–819; it reads AAAAAAEASESAS. The segment covering 948–966 has biased composition (pro residues); it reads TAPPTPPTPPPPLPLPVPP. A Phosphothreonine; by HIPK2 modification is found at threonine 955.

In terms of assembly, interacts with HIPK2. Interacts with CBFA2T3. Interacts with ZBTB38. Post-translationally, phosphorylated by HIPK2. This phosphorylation reduces stability and triggers ZBTB4 protein degradation in response to DNA damage.

Its subcellular location is the nucleus. The protein localises to the chromosome. Functionally, transcriptional repressor with bimodal DNA-binding specificity. Represses transcription in a methyl-CpG-dependent manner. Binds with a higher affinity to methylated CpG dinucleotides in the consensus sequence 5'-CGCG-3' but can also bind to the non-methylated consensus sequence 5'-CTGCNA-3' also known as the consensus kaiso binding site (KBS). Can also bind specifically to a single methyl-CpG pair and can bind hemimethylated DNA but with a lower affinity compared to methylated DNA. Plays a role in postnatal myogenesis, may be involved in the regulation of satellite cells self-renewal. The sequence is that of Zinc finger and BTB domain-containing protein 4 (Zbtb4) from Rattus norvegicus (Rat).